The chain runs to 165 residues: 2-C-methyl-D-erythritol 2,4-cyclodiphosphate synthase (165 aa).

A divalent metal cation contacts are provided by Asp-8 and His-10. 4-CDP-2-C-methyl-D-erythritol 2-phosphate is bound by residues 8–10 (DVH) and 34–35 (HS). An a divalent metal cation-binding site is contributed by His-42. 4-CDP-2-C-methyl-D-erythritol 2-phosphate-binding positions include 56–58 (DIG), 61–65 (FPDTD), 100–106 (AQAPKMA), 132–135 (TTTE), Phe-139, and Arg-142.

Belongs to the IspF family. Homotrimer. Requires a divalent metal cation as cofactor.

It catalyses the reaction 4-CDP-2-C-methyl-D-erythritol 2-phosphate = 2-C-methyl-D-erythritol 2,4-cyclic diphosphate + CMP. Its pathway is isoprenoid biosynthesis; isopentenyl diphosphate biosynthesis via DXP pathway; isopentenyl diphosphate from 1-deoxy-D-xylulose 5-phosphate: step 4/6. Functionally, involved in the biosynthesis of isopentenyl diphosphate (IPP) and dimethylallyl diphosphate (DMAPP), two major building blocks of isoprenoid compounds. Catalyzes the conversion of 4-diphosphocytidyl-2-C-methyl-D-erythritol 2-phosphate (CDP-ME2P) to 2-C-methyl-D-erythritol 2,4-cyclodiphosphate (ME-CPP) with a corresponding release of cytidine 5-monophosphate (CMP). This is 2-C-methyl-D-erythritol 2,4-cyclodiphosphate synthase from Pectobacterium atrosepticum (strain SCRI 1043 / ATCC BAA-672) (Erwinia carotovora subsp. atroseptica).